Consider the following 198-residue polypeptide: Chromophore lyase CpcS/CpeS 2 (198 aa).

Belongs to the CpcS/CpeS biliprotein lyase family.

Its subcellular location is the plastid. The protein resides in the organellar chromatophore. In terms of biological role, covalently attaches a chromophore to Cys residue(s) of phycobiliproteins. This is Chromophore lyase CpcS/CpeS 2 from Paulinella chromatophora.